The primary structure comprises 350 residues: Transmembrane protein 185B (350 aa).

Helical transmembrane passes span 16-36 (LIYA…DGII), 41-61 (WAVF…ASVG), 81-101 (FKAM…EILV), 111-131 (FWLL…AACV), 168-188 (WLVV…VVLY), 211-231 (VTMA…EVLL), and 240-260 (TFSY…LMAT).

It belongs to the TMEM185 family.

It localises to the membrane. The protein is Transmembrane protein 185B (Tmem185b) of Mus musculus (Mouse).